Here is a 512-residue protein sequence, read N- to C-terminus: ATP synthase subunit alpha (512 aa).

ATP is bound at residue 169–176; the sequence is GDRQTGKT.

The protein belongs to the ATPase alpha/beta chains family. In terms of assembly, F-type ATPases have 2 components, CF(1) - the catalytic core - and CF(0) - the membrane proton channel. CF(1) has five subunits: alpha(3), beta(3), gamma(1), delta(1), epsilon(1). CF(0) has three main subunits: a(1), b(2) and c(9-12). The alpha and beta chains form an alternating ring which encloses part of the gamma chain. CF(1) is attached to CF(0) by a central stalk formed by the gamma and epsilon chains, while a peripheral stalk is formed by the delta and b chains.

It localises to the cell inner membrane. It carries out the reaction ATP + H2O + 4 H(+)(in) = ADP + phosphate + 5 H(+)(out). Produces ATP from ADP in the presence of a proton gradient across the membrane. The alpha chain is a regulatory subunit. The polypeptide is ATP synthase subunit alpha (Rickettsia bellii (strain OSU 85-389)).